The primary structure comprises 175 residues: Co-chaperone protein HscB homolog (175 aa).

Positions 7–79 (SHFDLFDLPA…LKRATYLLHL (73 aa)) constitute a J domain.

This sequence belongs to the HscB family. As to quaternary structure, interacts with HscA and stimulates its ATPase activity.

Co-chaperone involved in the maturation of iron-sulfur cluster-containing proteins. Seems to help targeting proteins to be folded toward HscA. The sequence is that of Co-chaperone protein HscB homolog from Paraburkholderia phytofirmans (strain DSM 17436 / LMG 22146 / PsJN) (Burkholderia phytofirmans).